The primary structure comprises 168 residues: Nascent polypeptide-associated complex subunit alpha (168 aa).

The NAC-A/B domain occupies 14 to 78 (SKNEKKAREL…PKVDDFTRRL (65 aa)). A disordered region spans residues 83–129 (QQAASAAKDPQSIQADMAAAAAAPAAPAAPAAAPEEDEAGQVDESGL). Low complexity predominate over residues 100–115 (AAAAAAPAAPAAPAAA). In terms of domain architecture, UBA spans 129-168 (LDGQDIELVMQQANVSRNKAVKALREHNSDIVNAIMSLSK).

The protein belongs to the NAC-alpha family. As to quaternary structure, part of the nascent polypeptide-associated complex (NAC), consisting of EGD2 and EGD1. NAC associates with ribosomes via EGD1.

Its subcellular location is the cytoplasm. The protein localises to the nucleus. Its function is as follows. Component of the nascent polypeptide-associated complex (NAC), a dynamic component of the ribosomal exit tunnel, protecting the emerging polypeptides from interaction with other cytoplasmic proteins to ensure appropriate nascent protein targeting. The NAC complex also promotes mitochondrial protein import by enhancing productive ribosome interactions with the outer mitochondrial membrane and blocks the inappropriate interaction of ribosomes translating non-secretory nascent polypeptides with translocation sites in the membrane of the endoplasmic reticulum. EGD2 may also be involved in transcription regulation. The chain is Nascent polypeptide-associated complex subunit alpha (EGD2) from Eremothecium gossypii (strain ATCC 10895 / CBS 109.51 / FGSC 9923 / NRRL Y-1056) (Yeast).